The sequence spans 401 residues: Beta-ketoadipyl-CoA thiolase (401 aa).

The Acyl-thioester intermediate role is filled by C90. Catalysis depends on proton acceptor residues H357 and C387.

The protein belongs to the thiolase-like superfamily. Thiolase family.

It carries out the reaction succinyl-CoA + acetyl-CoA = 3-oxoadipyl-CoA + CoA. The protein operates within aromatic compound metabolism; beta-ketoadipate pathway; acetyl-CoA and succinyl-CoA from 3-oxoadipate: step 2/2. Catalyzes thiolytic cleavage of beta-ketoadipyl-CoA to succinyl-CoA and acetyl-CoA. In Acinetobacter baylyi (strain ATCC 33305 / BD413 / ADP1), this protein is Beta-ketoadipyl-CoA thiolase (pcaF).